Reading from the N-terminus, the 493-residue chain is Cytochrome P450 2E1 (493 aa).

298 to 303 (FAGTET) contacts substrate. C437 contributes to the heme binding site.

The protein belongs to the cytochrome P450 family. In terms of assembly, interacts with chaperones HSP70 and HSP90; this interaction is required for initial targeting to mitochondria. The cofactor is heme.

The protein localises to the endoplasmic reticulum membrane. The protein resides in the microsome membrane. It localises to the mitochondrion inner membrane. The catalysed reaction is an organic molecule + reduced [NADPH--hemoprotein reductase] + O2 = an alcohol + oxidized [NADPH--hemoprotein reductase] + H2O + H(+). The enzyme catalyses (5Z,8Z,11Z)-eicosatrienoate + reduced [NADPH--hemoprotein reductase] + O2 = 19-hydroxy-(5Z,8Z,11Z)-eicosatrienoate + oxidized [NADPH--hemoprotein reductase] + H2O + H(+). It catalyses the reaction (5Z,8Z,11Z,14Z,17Z)-eicosapentaenoate + reduced [NADPH--hemoprotein reductase] + O2 = 19-hydroxy-(5Z,8Z,11Z,14Z,17Z)-eicosapentaenoate + oxidized [NADPH--hemoprotein reductase] + H2O + H(+). It carries out the reaction (4Z,7Z,10Z,13Z,16Z,19Z)-docosahexaenoate + reduced [NADPH--hemoprotein reductase] + O2 = 21-hydroxy-(4Z,7Z,10Z,13Z,16Z,19Z)-docosahexaenoate + oxidized [NADPH--hemoprotein reductase] + H2O + H(+). The catalysed reaction is dodecanoate + reduced [NADPH--hemoprotein reductase] + O2 = 11-hydroxydodecanoate + oxidized [NADPH--hemoprotein reductase] + H2O + H(+). The enzyme catalyses tetradecanoate + reduced [NADPH--hemoprotein reductase] + O2 = 13-hydroxytetradecanoate + oxidized [NADPH--hemoprotein reductase] + H2O + H(+). It catalyses the reaction 4-nitrophenol + NADPH + O2 + H(+) = 4-nitrocatechol + NADP(+) + H2O. It functions in the pathway lipid metabolism; fatty acid metabolism. The omega-1 hydroxylase activity is stimulated by cytochrome b5. Functionally, a cytochrome P450 monooxygenase involved in the metabolism of fatty acids. Mechanistically, uses molecular oxygen inserting one oxygen atom into a substrate, and reducing the second into a water molecule, with two electrons provided by NADPH via cytochrome P450 reductase (NADPH--hemoprotein reductase). Catalyzes the hydroxylation of carbon-hydrogen bonds. Hydroxylates fatty acids specifically at the omega-1 position displaying the highest catalytic activity for saturated fatty acids. May be involved in the oxidative metabolism of xenobiotics. This is Cytochrome P450 2E1 (CYP2E1) from Macaca mulatta (Rhesus macaque).